The sequence spans 37 residues: Photosystem I reaction center subunit IX (37 aa).

Residues 4 to 24 form a helical membrane-spanning segment; it reads FLTTAPVVAAIWFTLTAGILI.

Belongs to the PsaJ family.

It localises to the cellular thylakoid membrane. In terms of biological role, may help in the organization of the PsaE and PsaF subunits. The chain is Photosystem I reaction center subunit IX from Synechococcus sp. (strain WH7803).